Reading from the N-terminus, the 320-residue chain is Cytochrome f (320 aa).

The signal sequence occupies residues 1–35; sequence MQTRNAFSCIKEGITRSISISVMIYIIIRAPFSNA. The heme site is built by tyrosine 36, cysteine 56, cysteine 59, and histidine 60. The chain crosses the membrane as a helical span at residues 286-306; sequence VQGLLFFLASIILAQIFLVLK.

It belongs to the cytochrome f family. In terms of assembly, the 4 large subunits of the cytochrome b6-f complex are cytochrome b6, subunit IV (17 kDa polypeptide, petD), cytochrome f and the Rieske protein, while the 4 small subunits are PetG, PetL, PetM and PetN. The complex functions as a dimer. Heme is required as a cofactor.

It localises to the plastid. Its subcellular location is the chloroplast thylakoid membrane. Functionally, component of the cytochrome b6-f complex, which mediates electron transfer between photosystem II (PSII) and photosystem I (PSI), cyclic electron flow around PSI, and state transitions. The protein is Cytochrome f of Phaseolus vulgaris (Kidney bean).